A 227-amino-acid chain; its full sequence is Ornithine decarboxylase antizyme 1 (227 aa).

Residues 20 to 50 form a disordered region; it reads EGDKPSATVHATRTMPLLSLHSRGGRSSESS. The segment covering 36-50 has biased composition (low complexity); sequence LLSLHSRGGRSSESS.

It belongs to the ODC antizyme family. In terms of assembly, interacts with ODC1 and thereby sterically blocks ODC homodimerization. Forms a ternary complex with PSMB4 and OAZ1 before PSMB4 is incorporated into the 20S proteasome. Interacts with AZIN2; this interaction disrupts the interaction between the antizyme and ODC1. Interacts with FAM171A1.

In terms of biological role, ornithine decarboxylase (ODC) antizyme protein that negatively regulates ODC activity and intracellular polyamine biosynthesis and uptake in response to increased intracellular polyamine levels. Binds to ODC monomers, inhibiting the assembly of the functional ODC homodimer, and targets the monomers for ubiquitin-independent proteolytic destruction by the 26S proteasome. Triggers ODC degradation by inducing the exposure of a cryptic proteasome-interacting surface of ODC. Stabilizes AZIN2 by interfering with its ubiquitination. Also inhibits cellular uptake of polyamines by inactivating the polyamine uptake transporter. SMAD1/OAZ1/PSMB4 complex mediates the degradation of the CREBBP/EP300 repressor SNIP1. Involved in the translocation of AZIN2 from ER-Golgi intermediate compartment (ERGIC) to the cytosol. The chain is Ornithine decarboxylase antizyme 1 (OAZ1) from Bos taurus (Bovine).